A 128-amino-acid chain; its full sequence is Protein BEX2 (128 aa).

The segment at 1 to 44 (MMPKEEQVLKNLTMENANEENEKKDEKEQDANKGEPLALSLGAG) is disordered. Residues 20 to 33 (ENEKKDEKEQDANK) are compositionally biased toward basic and acidic residues. Position 50 is an omega-N-methylarginine (Arg-50). Residues 103–128 (QLSHSLRAVSTDPPHHEHNDEFCLMP) form a disordered region. Residues 115 to 128 (PPHHEHNDEFCLMP) show a composition bias toward basic and acidic residues. Residues 117–121 (HHEHN) form a his cluster region. A Zn(2+)-binding site is contributed by Cys-125.

Belongs to the BEX family. In terms of assembly, interacts with LMO2, possibly leading to regulate the transcriptional activity of a DNA-binding complex containing LMO2. Interacts with OMP.

It is found in the cytoplasm. The protein localises to the nucleus. Regulator of mitochondrial apoptosis and G1 cell cycle. Regulates the level of PP2A regulatory subunit B and PP2A phosphatase activity. In absence of reductive stress, acts as a pseudosubstrate for the CRL2(FEM1B) complex: associates with FEM1B via zinc, thereby preventing association between FEM1B and its substrates. The polypeptide is Protein BEX2 (BEX2) (Bos taurus (Bovine)).